Consider the following 309-residue polypeptide: Probable MRF1 mitochondrial N(5)-glutamine methyltransferase mtq1 (309 aa).

S-adenosyl-L-methionine is bound by residues 124–128, D148, and N200; that span reads CTGSG. Substrate is bound at residue 200 to 203; it reads NPPY.

It belongs to the protein N5-glutamine methyltransferase family.

The protein resides in the mitochondrion. It catalyses the reaction L-glutaminyl-[peptide chain release factor] + S-adenosyl-L-methionine = N(5)-methyl-L-glutaminyl-[peptide chain release factor] + S-adenosyl-L-homocysteine + H(+). Its function is as follows. Methylates MRF1 on 'Gln-270' using S-adenosyl L-methionine as methyl donor. The polypeptide is Probable MRF1 mitochondrial N(5)-glutamine methyltransferase mtq1 (mtq1) (Schizosaccharomyces pombe (strain 972 / ATCC 24843) (Fission yeast)).